The primary structure comprises 708 residues: MATARGGSGPDPGSRGLLLLSFSVVLAGLCGGNSVERKIYIPLNKTAPCVRLLNATHQIGCQSSISGDTGVIHVVEKEDDLKWVLTDGPNPPYMVLLEGKLFTRDIMEKLKGETSRIAGLAVTLAKPNSTSSFSPSVQCPNDGFGIYSNSYGPEFAHCKKTLWNELGNGLAYDDFSFPIFLLEDENETKVIKQCYQDHNLGQNGSAPSFPLCAMQLFSHMHAVISTATCMRRSFIQSTFSINPEIVCDPLSDYNVWSMLKPINTSGGLEPDVRVVVAATRLDSRSFFWNVAPGAESAVASFVTQLAAAEALHKAPDVTTLPRNVMFVFFQGETFDYIGSSRMVYDMENGKFPVRLENIDSFVELGQVALRTSLELWMHTDPMSQKNESVKNQVEDLLVTLEQSGADTPQVVLSRLVQSQALPPSSLQRFLRARNISGVVLADHSGSFHNRYYQSIYDTAENINVTYPESQSPEEDLNFVTDTAKALADVATVLARALYKLAGGTNFNNSIQADPQTVTRLLYGFLVRANNSWFQSILRHDLRSYLDDGPLQHYIAVSSPTNTTYVVQYALANLTGKVTNLTQEQCQDPSKVPNESKDLYEYSWVQGPWNSNKTERLPRCVRSTVRLARALSPAFELSQWSSTEYSTWAESRWKDIQARIFLIASKELEFITLIVGFSILVFSLIVTYCINAKADVLFVAPREPGAVSY.

The first 34 residues, 1 to 34 (MATARGGSGPDPGSRGLLLLSFSVVLAGLCGGNS), serve as a signal peptide directing secretion. Topologically, residues 35–668 (VERKIYIPLN…IFLIASKELE (634 aa)) are lumenal. 3 N-linked (GlcNAc...) asparagine glycosylation sites follow: Asn-44, Asn-54, and Asn-128. A disulfide bridge connects residues Cys-49 and Cys-61. A disulfide bridge connects residues Cys-139 and Cys-158. N-linked (GlcNAc...) asparagine glycans are attached at residues Asn-186 and Asn-203. 2 cysteine pairs are disulfide-bonded: Cys-194–Cys-212 and Cys-229–Cys-247. Residues Asn-263, Asn-386, Asn-434, Asn-463, Asn-507, Asn-529, Asn-561, Asn-572, Asn-579, Asn-593, and Asn-611 are each glycosylated (N-linked (GlcNAc...) asparagine). A disulfide bond links Cys-585 and Cys-619. A helical membrane pass occupies residues 669 to 689 (FITLIVGFSILVFSLIVTYCI). Topologically, residues 690–708 (NAKADVLFVAPREPGAVSY) are cytoplasmic.

This sequence belongs to the nicastrin family. Component of the gamma-secretase complex. The functional gamma-secretase complex is composed of at least four polypeptides: a presenilin homodimer (PSEN1 or PSEN2), nicastrin (NCSTN), APH1 (APH1A or APH1B) and PEN2. Binds to proteolytic processed C-terminal fragments C83 and C99 of the amyloid precursor protein (APP). Interacts with PSEN1 and PSEN2. In terms of processing, N-glycosylated.

It localises to the membrane. It is found in the cytoplasmic vesicle membrane. Its subcellular location is the melanosome. Essential subunit of the gamma-secretase complex, an endoprotease complex that catalyzes the intramembrane cleavage of integral membrane proteins such as Notch receptors and APP (amyloid-beta precursor protein). The gamma-secretase complex plays a role in Notch and Wnt signaling cascades and regulation of downstream processes via its role in processing key regulatory proteins, and by regulating cytosolic CTNNB1 levels. The polypeptide is Nicastrin (Ncstn) (Rattus norvegicus (Rat)).